Reading from the N-terminus, the 264-residue chain is MKLNLQGKTALVTGSTSGIGKAIASSLAEEGAAVIINGRREEKVNQTIDELKTQHAEAVLYPAAFDLGTEEGCNELFQAYPEVDILVNNLGIFEPAEYFDIPDDEWFRFFEVNIMSGVRLTRRYLHNMIEKKEGRVIFIASEAAIMPSQEMAHYSATKTMQLSISRSLAELATGTNVTVNTVMPGSTLTEGVETMLNSLYPGENLTVQEAEARFMKENRPTSIIQRLIRPEEIAHFVTFLSSPLSSAINGAALRADGGLVRSVF.

Residue 13–20 (TGSTSGIG) participates in NADP(+) binding. Ser141 serves as a coordination point for substrate. The Proton acceptor role is filled by Tyr154.

It belongs to the short-chain dehydrogenases/reductases (SDR) family.

This is an uncharacterized protein from Bacillus subtilis (strain 168).